Reading from the N-terminus, the 40-residue chain is Auxin-responsive endogenous peptide 1 (40 aa).

Residues 7-29 (LIYRLVVRCFLDYSICAPFYFYH) form a helical membrane-spanning segment.

As to expression, expressed in cotyledons, hypocotyls, roots, newly developing leaves and shoot apical meristem. Not detected in flowers, siliques or mature leaves.

The protein localises to the cytoplasm. It is found in the nucleus. The protein resides in the membrane. Negative regulator of the auxin response. This Arabidopsis thaliana (Mouse-ear cress) protein is Auxin-responsive endogenous peptide 1.